Reading from the N-terminus, the 511-residue chain is Histidine ammonia-lyase (511 aa).

Residues 142-144 (ASG) constitute a cross-link (5-imidazolinone (Ala-Gly)). Residue Ser-143 is modified to 2,3-didehydroalanine (Ser).

Belongs to the PAL/histidase family. Post-translationally, contains an active site 4-methylidene-imidazol-5-one (MIO), which is formed autocatalytically by cyclization and dehydration of residues Ala-Ser-Gly.

It localises to the cytoplasm. The enzyme catalyses L-histidine = trans-urocanate + NH4(+). It participates in amino-acid degradation; L-histidine degradation into L-glutamate; N-formimidoyl-L-glutamate from L-histidine: step 1/3. This chain is Histidine ammonia-lyase, found in Brucella suis (strain ATCC 23445 / NCTC 10510).